The sequence spans 395 residues: ATP synthase subunit beta, chloroplastic (395 aa).

ATP is bound at residue 72–79 (GGAGVGKT).

This sequence belongs to the ATPase alpha/beta chains family. In terms of assembly, F-type ATPases have 2 components, CF(1) - the catalytic core - and CF(0) - the membrane proton channel. CF(1) has five subunits: alpha(3), beta(3), gamma(1), delta(1), epsilon(1). CF(0) has four main subunits: a(1), b(1), b'(1) and c(9-12).

The protein resides in the plastid. It is found in the chloroplast thylakoid membrane. The enzyme catalyses ATP + H2O + 4 H(+)(in) = ADP + phosphate + 5 H(+)(out). Functionally, produces ATP from ADP in the presence of a proton gradient across the membrane. The catalytic sites are hosted primarily by the beta subunits. This Microlepia platyphylla (Plate fern) protein is ATP synthase subunit beta, chloroplastic.